Consider the following 246-residue polypeptide: Proteasome subunit alpha type-5 (246 aa).

It belongs to the peptidase T1A family. The 26S proteasome consists of a 20S proteasome core and two 19S regulatory subunits. The 20S proteasome core is composed of 28 subunits that are arranged in four stacked rings, resulting in a barrel-shaped structure. The two end rings are each formed by seven alpha subunits, and the two central rings are each formed by seven beta subunits. The catalytic chamber with the active sites is on the inside of the barrel.

It localises to the cytoplasm. The protein resides in the nucleus. In terms of biological role, the proteasome is a multicatalytic proteinase complex which is characterized by its ability to cleave peptides with Arg, Phe, Tyr, Leu, and Glu adjacent to the leaving group at neutral or slightly basic pH. The proteasome has an ATP-dependent proteolytic activity. The chain is Proteasome subunit alpha type-5 from Trypanosoma brucei brucei.